The following is a 341-amino-acid chain: Anthranilate phosphoribosyltransferase (341 aa).

Residues Gly-83, Ser-91, 93-96 (NTST), 111-115 (KHGNR), and Ser-123 each bind 5-phospho-alpha-D-ribose 1-diphosphate. An anthranilate-binding site is contributed by Gly-83. A Mg(2+)-binding site is contributed by Ser-95. An anthranilate-binding site is contributed by Asn-114. Arg-169 lines the anthranilate pocket. Residues Asp-228 and Glu-229 each contribute to the Mg(2+) site.

Belongs to the anthranilate phosphoribosyltransferase family. In terms of assembly, homodimer. The cofactor is Mg(2+).

It carries out the reaction N-(5-phospho-beta-D-ribosyl)anthranilate + diphosphate = 5-phospho-alpha-D-ribose 1-diphosphate + anthranilate. Its pathway is amino-acid biosynthesis; L-tryptophan biosynthesis; L-tryptophan from chorismate: step 2/5. Functionally, catalyzes the transfer of the phosphoribosyl group of 5-phosphorylribose-1-pyrophosphate (PRPP) to anthranilate to yield N-(5'-phosphoribosyl)-anthranilate (PRA). In Hyphomonas neptunium (strain ATCC 15444), this protein is Anthranilate phosphoribosyltransferase.